The sequence spans 154 residues: Large ribosomal subunit protein uL13 (154 aa).

This sequence belongs to the universal ribosomal protein uL13 family. In terms of assembly, part of the 50S ribosomal subunit.

Its function is as follows. This protein is one of the early assembly proteins of the 50S ribosomal subunit, although it is not seen to bind rRNA by itself. It is important during the early stages of 50S assembly. This is Large ribosomal subunit protein uL13 from Brucella melitensis biotype 2 (strain ATCC 23457).